Consider the following 319-residue polypeptide: Protein quaking-B (319 aa).

The 67-residue stretch at 87–153 folds into the KH domain; that stretch reads YVPVKEYPDF…WEHLNEDLHV (67 aa). Residues 276-279 carry the SH3-binding motif; that stretch reads PQTP.

This sequence belongs to the quaking family. As to quaternary structure, homodimer; does not require RNA to homodimerize.

It localises to the cytoplasm. It is found in the nucleus. RNA reader protein, which recognizes and binds specific RNAs, thereby regulating RNA metabolic processes, such as pre-mRNA splicing, circular RNA (circRNA) formation, mRNA export, mRNA stability and/or translation. Involved in various cellular processes, such as mRNA storage into stress granules, apoptosis, interferon response, glial cell fate and development. Binds to the 5'-NACUAAY-N(1,20)-UAAY-3' RNA core sequence. Acts as a mRNA modification reader that specifically recognizes and binds mRNA transcripts modified by internal N(7)-methylguanine (m7G). Promotes the formation of circular RNAs (circRNAs): acts by binding to sites flanking circRNA-forming exons. CircRNAs are produced by back-splicing circularization of pre-mRNAs. Required to protect and promote stability of mRNAs which promotes oligodendrocyte differentiation. Acts as an important regulator of muscle development: required during early skeletal myofibril formation by regulating the accumulation of the muscle-specific tropomyosin-3 (tpm3) transcripts. This is Protein quaking-B (qki2) from Danio rerio (Zebrafish).